A 288-amino-acid polypeptide reads, in one-letter code: DegV domain-containing protein (288 aa).

One can recognise a DegV domain in the interval 3–282 (IAVMTDSTSY…SGGLGLGYVG (280 aa)). Positions 62 and 95 each coordinate hexadecanoate.

May bind long-chain fatty acids, such as palmitate, and may play a role in lipid transport or fatty acid metabolism. The chain is DegV domain-containing protein from Staphylococcus aureus.